The following is a 22-amino-acid chain: Short-chain-enoyl-CoA hydratase (22 aa).

Belongs to the enoyl-CoA hydratase/isomerase family.

It catalyses the reaction a short-chain (3S)-3-hydroxyacyl-CoA = a short-chain (2E)-enoyl-CoA + H2O. The protein operates within lipid metabolism; butanoate metabolism. In Clostridium pasteurianum, this protein is Short-chain-enoyl-CoA hydratase (crt).